Here is a 324-residue protein sequence, read N- to C-terminus: tRNA(Ile)-lysidine synthase (324 aa).

ATP is bound at residue serine 33–serine 38.

It belongs to the tRNA(Ile)-lysidine synthase family.

It localises to the cytoplasm. The catalysed reaction is cytidine(34) in tRNA(Ile2) + L-lysine + ATP = lysidine(34) in tRNA(Ile2) + AMP + diphosphate + H(+). Functionally, ligates lysine onto the cytidine present at position 34 of the AUA codon-specific tRNA(Ile) that contains the anticodon CAU, in an ATP-dependent manner. Cytidine is converted to lysidine, thus changing the amino acid specificity of the tRNA from methionine to isoleucine. This is tRNA(Ile)-lysidine synthase from Thermobifida fusca (strain YX).